The following is a 438-amino-acid chain: Transposon Ty2-OR2 Gag polyprotein (438 aa).

Disordered regions lie at residues 1–88 (MESQ…YQQH), 365–397 (NVSR…AKAH), and 419–438 (SSQY…TERI). Polar residues-rich tracts occupy residues 19–39 (ASVT…SASN) and 49–60 (KVNSQEETTPGT). Residues 295–397 (ENNINVSDRL…SSKPRAAKAH (103 aa)) are RNA-binding. Over residues 369-381 (TSPNTTNTKVTTR) the composition is skewed to low complexity.

In terms of assembly, homotrimer.

It is found in the cytoplasm. Functionally, capsid protein (CA) is the structural component of the virus-like particle (VLP), forming the shell that encapsulates the retrotransposons dimeric RNA genome. The particles are assembled from trimer-clustered units and there are holes in the capsid shells that allow for the diffusion of macromolecules. CA also has nucleocapsid-like chaperone activity, promoting primer tRNA(i)-Met annealing to the multipartite primer-binding site (PBS), dimerization of Ty2 RNA and initiation of reverse transcription. The sequence is that of Transposon Ty2-OR2 Gag polyprotein (TY2A-OR2) from Saccharomyces cerevisiae (strain ATCC 204508 / S288c) (Baker's yeast).